The primary structure comprises 545 residues: CTP synthase (545 aa).

The interval 1–265 (MTKYIFITGG…DEIVVKKLSL (265 aa)) is amidoligase domain. Ser13 contributes to the CTP binding site. Ser13 contacts UTP. ATP-binding positions include 14–19 (SLGKGI) and Asp71. Mg(2+) contacts are provided by Asp71 and Glu139. Residues 146 to 148 (DIE), 186 to 191 (KTKPTQ), and Lys222 contribute to the CTP site. UTP-binding positions include 186–191 (KTKPTQ) and Lys222. In terms of domain architecture, Glutamine amidotransferase type-1 spans 290–541 (KIAMVGKYTE…VFAARIHHQE (252 aa)). L-glutamine is bound at residue Gly351. Cys378 serves as the catalytic Nucleophile; for glutamine hydrolysis. Residues 379-382 (LGMQ), Glu402, and Arg469 contribute to the L-glutamine site. Residues His514 and Glu516 contribute to the active site.

It belongs to the CTP synthase family. In terms of assembly, homotetramer.

The catalysed reaction is UTP + L-glutamine + ATP + H2O = CTP + L-glutamate + ADP + phosphate + 2 H(+). It carries out the reaction L-glutamine + H2O = L-glutamate + NH4(+). It catalyses the reaction UTP + NH4(+) + ATP = CTP + ADP + phosphate + 2 H(+). The protein operates within pyrimidine metabolism; CTP biosynthesis via de novo pathway; CTP from UDP: step 2/2. Allosterically activated by GTP, when glutamine is the substrate; GTP has no effect on the reaction when ammonia is the substrate. The allosteric effector GTP functions by stabilizing the protein conformation that binds the tetrahedral intermediate(s) formed during glutamine hydrolysis. Inhibited by the product CTP, via allosteric rather than competitive inhibition. Functionally, catalyzes the ATP-dependent amination of UTP to CTP with either L-glutamine or ammonia as the source of nitrogen. Regulates intracellular CTP levels through interactions with the four ribonucleotide triphosphates. The protein is CTP synthase of Legionella pneumophila (strain Lens).